A 242-amino-acid chain; its full sequence is Uridylate kinase (242 aa).

Residue 15 to 18 coordinates ATP; sequence KLSG. An involved in allosteric activation by GTP region spans residues 23 to 28; the sequence is GAEGFG. G57 serves as a coordination point for UMP. ATP contacts are provided by G58 and R62. Residues D77 and 138-145 each bind UMP; that span reads TGNPFFTT. ATP-binding residues include T165, Y171, and D174.

This sequence belongs to the UMP kinase family. Homohexamer.

The protein localises to the cytoplasm. It carries out the reaction UMP + ATP = UDP + ADP. It participates in pyrimidine metabolism; CTP biosynthesis via de novo pathway; UDP from UMP (UMPK route): step 1/1. Its activity is regulated as follows. Allosterically activated by GTP. Inhibited by UTP. In terms of biological role, catalyzes the reversible phosphorylation of UMP to UDP. In Photorhabdus laumondii subsp. laumondii (strain DSM 15139 / CIP 105565 / TT01) (Photorhabdus luminescens subsp. laumondii), this protein is Uridylate kinase.